The chain runs to 802 residues: Leucine--tRNA ligase (802 aa).

The 'HIGH' region signature appears at 40–51 (PYPSGAGLHVGH). Positions 576 to 580 (KMSKS) match the 'KMSKS' region motif. Lysine 579 lines the ATP pocket.

It belongs to the class-I aminoacyl-tRNA synthetase family.

Its subcellular location is the cytoplasm. It carries out the reaction tRNA(Leu) + L-leucine + ATP = L-leucyl-tRNA(Leu) + AMP + diphosphate. The polypeptide is Leucine--tRNA ligase (Bacillus mycoides (strain KBAB4) (Bacillus weihenstephanensis)).